We begin with the raw amino-acid sequence, 692 residues long: Elongation factor G (692 aa).

In terms of domain architecture, tr-type G spans 8–282; sequence ENTRNIGIMA…AVIDYLPSPL (275 aa). Residues 17 to 24, 81 to 85, and 135 to 138 each bind GTP; these read AHIDAGKT, DTPGH, and NKMD.

This sequence belongs to the TRAFAC class translation factor GTPase superfamily. Classic translation factor GTPase family. EF-G/EF-2 subfamily.

Its subcellular location is the cytoplasm. Catalyzes the GTP-dependent ribosomal translocation step during translation elongation. During this step, the ribosome changes from the pre-translocational (PRE) to the post-translocational (POST) state as the newly formed A-site-bound peptidyl-tRNA and P-site-bound deacylated tRNA move to the P and E sites, respectively. Catalyzes the coordinated movement of the two tRNA molecules, the mRNA and conformational changes in the ribosome. In Bacillus cereus (strain ZK / E33L), this protein is Elongation factor G.